The chain runs to 89 residues: Large ribosomal subunit protein eL43 (89 aa).

Zn(2+)-binding residues include cysteine 38, cysteine 41, cysteine 56, and cysteine 59. The segment at 38 to 59 (CPSCDRPGVKRESRGIWKCRKC) adopts a C4-type zinc-finger fold.

Belongs to the eukaryotic ribosomal protein eL43 family. Putative zinc-binding subfamily. As to quaternary structure, part of the 50S ribosomal subunit. Zn(2+) is required as a cofactor.

Binds to the 23S rRNA. This is Large ribosomal subunit protein eL43 from Methanothermobacter thermautotrophicus (strain ATCC 29096 / DSM 1053 / JCM 10044 / NBRC 100330 / Delta H) (Methanobacterium thermoautotrophicum).